The primary structure comprises 827 residues: Villin-1 (827 aa).

The interval 1–126 (MTKLSAQVKG…IRKGGVASGM (126 aa)) is necessary for homodimerization. Residues 1–734 (MTKLSAQVKG…YEDLKAELGN (734 aa)) are core. Residues 27 to 76 (MQMVPVPSNSFGSFFDGDCYVIQAIHKTGSNLSYDIHYWIGQASSQDEQG) form a Gelsolin-like 1 repeat. LPA/PIP2-binding site stretches follow at residues 112–119 (KKGIVIRK) and 138–146 (RLLHVKGKR). Gelsolin-like repeat units lie at residues 148 to 188 (VVAG…MERL) and 265 to 309 (VVVR…QEKK). Ser366 carries the post-translational modification Phosphoserine. Gelsolin-like repeat units follow at residues 407 to 457 (NLEL…DEIT), 528 to 568 (TKAF…DERE), and 631 to 672 (FLAT…DEKK). Ser735 is modified (phosphoserine). Residues 735–827 (SGDWSQITAE…QNLKKEKGLF (93 aa)) form a headpiece region. Residues 761–827 (SGPLPIFPLE…QNLKKEKGLF (67 aa)) enclose the HP domain. The segment at 816–824 (KQQNLKKEK) is LPA/PIP2-binding site 3.

Belongs to the villin/gelsolin family. Monomer. Homodimer; homodimerization is necessary for actin-bundling. Associates with F-actin; phosphorylation at tyrosine residues decreases the association with F-actin. Interacts (phosphorylated at C-terminus tyrosine phosphorylation sites) with PLCG1 (via the SH2 domains). Interacts (phosphorylated form) with PLCG1; the interaction is enhanced by hepatocyte growth factor (HGF). Phosphorylated on tyrosine residues by SRC. The unphosphorylated form increases the initial rate of actin-nucleating activity, whereas the tyrosine-phosphorylated form inhibits actin-nucleating activity, enhances actin-bundling activity and enhances actin-severing activity by reducing high Ca(2+) requirements. The tyrosine-phosphorylated form does not regulate actin-capping activity. Tyrosine phosphorylation is essential for cell migration: tyrosine phosphorylation sites in the N-terminus half regulate actin reorganization and cell morphology, whereas tyrosine phosphorylation sites in the C-terminus half regulate cell migration via interaction with PLCG1. Tyrosine phosphorylation is induced by epidermal growth factor (EGF) and stimulates cell migration.

It is found in the cytoplasm. Its subcellular location is the cytoskeleton. The protein resides in the cell projection. It localises to the lamellipodium. The protein localises to the ruffle. It is found in the microvillus. Its subcellular location is the filopodium tip. The protein resides in the filopodium. Epithelial cell-specific Ca(2+)-regulated actin-modifying protein that modulates the reorganization of microvillar actin filaments. Plays a role in the actin nucleation, actin filament bundle assembly, actin filament capping and severing. Binds phosphatidylinositol 4,5-bisphosphate (PIP2) and lysophosphatidic acid (LPA); binds LPA with higher affinity than PIP2. Binding to LPA increases its phosphorylation by SRC and inhibits all actin-modifying activities. Binding to PIP2 inhibits actin-capping and -severing activities but enhances actin-bundling activity. Regulates the intestinal epithelial cell morphology, cell invasion, cell migration and apoptosis. Protects against apoptosis induced by dextran sodium sulfate (DSS) in the gastrointestinal epithelium. Appears to regulate cell death by maintaining mitochondrial integrity. Enhances hepatocyte growth factor (HGF)-induced epithelial cell motility, chemotaxis and wound repair. In Bos taurus (Bovine), this protein is Villin-1 (VIL1).